The chain runs to 287 residues: Undecaprenyl-diphosphatase (287 aa).

The next 7 helical transmembrane spans lie at 6–26 (LHLLKAFFLGIVEGLTEFIPV), 45–65 (SGKVFEVVIQFGSILAVMWIF), 89–109 (NLLLAFLPAAVIGAIFIKSIK), 111–131 (VFYHPGVVAVTLVVGGFIMLW), 204–224 (ATEFSFFLAMPTMLGAAVYDL), 238–258 (AIAVGFVAAFLSALVVVRAVL), and 266–286 (YRVFAWYRIALGLVVAAWIYA).

This sequence belongs to the UppP family.

The protein localises to the cell inner membrane. The catalysed reaction is di-trans,octa-cis-undecaprenyl diphosphate + H2O = di-trans,octa-cis-undecaprenyl phosphate + phosphate + H(+). Its function is as follows. Catalyzes the dephosphorylation of undecaprenyl diphosphate (UPP). Confers resistance to bacitracin. The protein is Undecaprenyl-diphosphatase of Bordetella bronchiseptica (strain ATCC BAA-588 / NCTC 13252 / RB50) (Alcaligenes bronchisepticus).